Here is a 231-residue protein sequence, read N- to C-terminus: Octanoyl-[acyl-carrier-protein]:protein N-octanoyltransferase LIPT2, mitochondrial (231 aa).

The transit peptide at 1–31 directs the protein to the mitochondrion; sequence MRQPAVRLVRLGRVPYAELLGLQDRWLRRLQ. Residues 41–224 enclose the BPL/LPL catalytic domain; the sequence is GTEAGALLLC…AFKEIYKCTL (184 aa). Substrate-binding positions include 85 to 92, 154 to 156, and 167 to 169; these read RGGLATFH, AIG, and GLA. The active-site Acyl-thioester intermediate is C185.

It belongs to the LipB family.

It localises to the mitochondrion. It catalyses the reaction octanoyl-[ACP] + L-lysyl-[protein] = N(6)-octanoyl-L-lysyl-[protein] + holo-[ACP] + H(+). It functions in the pathway protein modification; protein lipoylation via endogenous pathway; protein N(6)-(lipoyl)lysine from octanoyl-[acyl-carrier-protein]: step 1/2. Catalyzes the transfer of endogenously produced octanoic acid from octanoyl-acyl-carrier-protein (octanoyl-ACP) onto the lipoyl domains of lipoate-dependent enzymes such as the protein H of the glycine cleavage system (GCSH). Lipoyl-ACP can also act as a substrate although octanoyl-ACP is likely to be the physiological substrate. In Homo sapiens (Human), this protein is Octanoyl-[acyl-carrier-protein]:protein N-octanoyltransferase LIPT2, mitochondrial.